The chain runs to 185 residues: Ribosome-recycling factor (185 aa).

It belongs to the RRF family.

The protein resides in the cytoplasm. Its function is as follows. Responsible for the release of ribosomes from messenger RNA at the termination of protein biosynthesis. May increase the efficiency of translation by recycling ribosomes from one round of translation to another. The chain is Ribosome-recycling factor from Glaesserella parasuis serovar 5 (strain SH0165) (Haemophilus parasuis).